The sequence spans 59 residues: Large ribosomal subunit protein bL32 (59 aa).

The interval 1–59 (MAVQQNRKSRSRRGMRRSHDALSSAALSIDPTTGEKHRRHHVTPDGFYRGKKVVEVSQD) is disordered. Positions 7 to 16 (RKSRSRRGMR) are enriched in basic residues.

Belongs to the bacterial ribosomal protein bL32 family.

The protein is Large ribosomal subunit protein bL32 of Hahella chejuensis (strain KCTC 2396).